A 241-amino-acid polypeptide reads, in one-letter code: DNA repair protein RecO (241 aa).

The protein belongs to the RecO family.

Involved in DNA repair and RecF pathway recombination. This Roseobacter denitrificans (strain ATCC 33942 / OCh 114) (Erythrobacter sp. (strain OCh 114)) protein is DNA repair protein RecO.